The following is a 414-amino-acid chain: Gamma-glutamyl phosphate reductase (414 aa).

It belongs to the gamma-glutamyl phosphate reductase family.

Its subcellular location is the cytoplasm. It carries out the reaction L-glutamate 5-semialdehyde + phosphate + NADP(+) = L-glutamyl 5-phosphate + NADPH + H(+). It participates in amino-acid biosynthesis; L-proline biosynthesis; L-glutamate 5-semialdehyde from L-glutamate: step 2/2. Catalyzes the NADPH-dependent reduction of L-glutamate 5-phosphate into L-glutamate 5-semialdehyde and phosphate. The product spontaneously undergoes cyclization to form 1-pyrroline-5-carboxylate. The protein is Gamma-glutamyl phosphate reductase of Clostridium beijerinckii (strain ATCC 51743 / NCIMB 8052) (Clostridium acetobutylicum).